A 446-amino-acid polypeptide reads, in one-letter code: Glutamyl-tRNA reductase 2 (446 aa).

Substrate-binding positions include 53–56 (TCNR), S105, 110–112 (EQQ), and Q116. C54 serves as the catalytic Nucleophile. 185–190 (GAGKMG) contacts NADP(+). The segment at 409-446 (AAELFGIENETAGGERREGGAEGAAAAPGAGPVRSQGT) is disordered. The segment covering 431 to 440 (GAAAAPGAGP) has biased composition (low complexity).

It belongs to the glutamyl-tRNA reductase family. Homodimer.

The catalysed reaction is (S)-4-amino-5-oxopentanoate + tRNA(Glu) + NADP(+) = L-glutamyl-tRNA(Glu) + NADPH + H(+). Its pathway is porphyrin-containing compound metabolism; protoporphyrin-IX biosynthesis; 5-aminolevulinate from L-glutamyl-tRNA(Glu): step 1/2. Catalyzes the NADPH-dependent reduction of glutamyl-tRNA(Glu) to glutamate 1-semialdehyde (GSA). The protein is Glutamyl-tRNA reductase 2 of Anaeromyxobacter dehalogenans (strain 2CP-C).